A 47-amino-acid chain; its full sequence is Potassium channel toxin alpha-KTx 7.1 (47 aa).

The signal sequence occupies residues 1–12; that stretch reads RGSVDYKDDDDK. 3 cysteine pairs are disulfide-bonded: C16-C37, C22-C42, and C26-C44.

Belongs to the short scorpion toxin superfamily. Potassium channel inhibitor family. Alpha-KTx 07 subfamily. As to expression, expressed by the venom gland.

The protein localises to the secreted. Its function is as follows. Potent inhibitor of the A-type voltage-gated potassium channels. Most potent inhibitor of Kv1.2/KCNA2 channels. Reversibly block the Shaker B potassium-channels (Kv1.1 sub-family). The protein is Potassium channel toxin alpha-KTx 7.1 (PTX-1) of Pandinus imperator (Emperor scorpion).